The primary structure comprises 170 residues: Photosystem I assembly protein Ycf3 (170 aa).

TPR repeat units lie at residues 35-68 (AFTH…EIDP), 72-105 (SYIL…NSSL), and 120-153 (GEQA…APSN).

It belongs to the Ycf3 family.

It localises to the plastid. Its subcellular location is the chloroplast thylakoid membrane. Functionally, essential for the assembly of the photosystem I (PSI) complex. May act as a chaperone-like factor to guide the assembly of the PSI subunits. The sequence is that of Photosystem I assembly protein Ycf3 from Anthoceros angustus (Hornwort).